The chain runs to 164 residues: Endoribonuclease YbeY (164 aa).

3 residues coordinate Zn(2+): histidine 117, histidine 121, and histidine 127.

The protein belongs to the endoribonuclease YbeY family. Zn(2+) is required as a cofactor.

The protein resides in the cytoplasm. Single strand-specific metallo-endoribonuclease involved in late-stage 70S ribosome quality control and in maturation of the 3' terminus of the 16S rRNA. The protein is Endoribonuclease YbeY of Mycoplasma capricolum subsp. capricolum (strain California kid / ATCC 27343 / NCTC 10154).